The sequence spans 197 residues: Large ribosomal subunit protein uL11 (197 aa).

Belongs to the universal ribosomal protein uL11 family. As to quaternary structure, part of the ribosomal stalk of the 50S ribosomal subunit. Interacts with L10 and the large rRNA to form the base of the stalk. L10 forms an elongated spine to which L12 dimers bind in a sequential fashion forming a multimeric L10(L12)X complex. Post-translationally, one or more lysine residues are methylated.

Its function is as follows. Forms part of the ribosomal stalk which helps the ribosome interact with GTP-bound translation factors. This chain is Large ribosomal subunit protein uL11, found in Mycoplasmopsis pulmonis (strain UAB CTIP) (Mycoplasma pulmonis).